An 844-amino-acid chain; its full sequence is Beta-mannosidase B (844 aa).

Glutamate 432 functions as the Proton donor in the catalytic mechanism. N-linked (GlcNAc...) asparagine glycosylation is present at asparagine 723.

The protein belongs to the glycosyl hydrolase 2 family. Beta-mannosidase B subfamily.

It carries out the reaction Hydrolysis of terminal, non-reducing beta-D-mannose residues in beta-D-mannosides.. It functions in the pathway glycan metabolism; N-glycan degradation. In terms of biological role, exoglycosidase that cleaves the single beta-linked mannose residue from the non-reducing end of beta-mannosidic oligosaccharides of various complexity and length. Prefers mannobiose over mannotriose and has no activity against polymeric mannan. Is also severely restricted by galactosyl substitutions at the +1 subsite. This is Beta-mannosidase B (mndB) from Aspergillus niger (strain ATCC MYA-4892 / CBS 513.88 / FGSC A1513).